Consider the following 266-residue polypeptide: Ribosomal RNA small subunit methyltransferase A (266 aa).

Positions 10, 12, 37, 58, 82, and 105 each coordinate S-adenosyl-L-methionine.

This sequence belongs to the class I-like SAM-binding methyltransferase superfamily. rRNA adenine N(6)-methyltransferase family. RsmA subfamily.

It localises to the cytoplasm. The catalysed reaction is adenosine(1518)/adenosine(1519) in 16S rRNA + 4 S-adenosyl-L-methionine = N(6)-dimethyladenosine(1518)/N(6)-dimethyladenosine(1519) in 16S rRNA + 4 S-adenosyl-L-homocysteine + 4 H(+). Its function is as follows. Specifically dimethylates two adjacent adenosines (A1518 and A1519) in the loop of a conserved hairpin near the 3'-end of 16S rRNA in the 30S particle. May play a critical role in biogenesis of 30S subunits. In Mycoplasma capricolum subsp. capricolum (strain California kid / ATCC 27343 / NCTC 10154), this protein is Ribosomal RNA small subunit methyltransferase A.